A 191-amino-acid chain; its full sequence is Molybdenum cofactor guanylyltransferase (191 aa).

Residues 11 to 13 (LCG), Lys23, Asp66, and Asp97 contribute to the GTP site. Residue Asp97 coordinates Mg(2+).

Belongs to the MobA family. Monomer. It depends on Mg(2+) as a cofactor.

It is found in the cytoplasm. The catalysed reaction is Mo-molybdopterin + GTP + H(+) = Mo-molybdopterin guanine dinucleotide + diphosphate. Transfers a GMP moiety from GTP to Mo-molybdopterin (Mo-MPT) cofactor (Moco or molybdenum cofactor) to form Mo-molybdopterin guanine dinucleotide (Mo-MGD) cofactor. This is Molybdenum cofactor guanylyltransferase from Campylobacter jejuni subsp. doylei (strain ATCC BAA-1458 / RM4099 / 269.97).